An 822-amino-acid polypeptide reads, in one-letter code: IQ and AAA domain-containing protein 1-like (822 aa).

Positions 206 to 235 (QDQGAIVIQKVWKGYLQRKRIEQDRRMEME) constitute an IQ domain. Over residues 338–363 (RQELEAQAQENKKKEQEKNKDKVKEK) the composition is skewed to basic and acidic residues. 2 disordered regions span residues 338-378 (RQEL…KAKK) and 457-484 (REET…KDLT). A compositionally biased stretch (basic residues) spans 464 to 479 (KSPKKKGGKKSGKKKK). ATP is bound at residue 569–576 (GPSGMGKK).

The protein belongs to the AAA ATPase family.

The sequence is that of IQ and AAA domain-containing protein 1-like (Iqca1l) from Rattus norvegicus (Rat).